A 392-amino-acid polypeptide reads, in one-letter code: Phospho-N-acetylmuramoyl-pentapeptide-transferase (392 aa).

The next 11 membrane-spanning stretches (helical) occupy residues 24–44, 76–96, 100–120, 137–157, 170–190, 193–213, 225–245, 262–282, 289–309, 314–334, and 369–389; these read YLTM…LLAG, TMGG…WFDL, FVWI…VDDW, YFWQ…CISE, WVQS…VPFF, VSYP…IVGA, GLAI…AYVT, SGEL…FLWF, VFMG…IAVI, IVLA…MLQV, and QVVI…LSTL.

This sequence belongs to the glycosyltransferase 4 family. MraY subfamily. The cofactor is Mg(2+).

Its subcellular location is the cell inner membrane. It catalyses the reaction UDP-N-acetyl-alpha-D-muramoyl-L-alanyl-gamma-D-glutamyl-meso-2,6-diaminopimeloyl-D-alanyl-D-alanine + di-trans,octa-cis-undecaprenyl phosphate = di-trans,octa-cis-undecaprenyl diphospho-N-acetyl-alpha-D-muramoyl-L-alanyl-D-glutamyl-meso-2,6-diaminopimeloyl-D-alanyl-D-alanine + UMP. The protein operates within cell wall biogenesis; peptidoglycan biosynthesis. Its function is as follows. Catalyzes the initial step of the lipid cycle reactions in the biosynthesis of the cell wall peptidoglycan: transfers peptidoglycan precursor phospho-MurNAc-pentapeptide from UDP-MurNAc-pentapeptide onto the lipid carrier undecaprenyl phosphate, yielding undecaprenyl-pyrophosphoryl-MurNAc-pentapeptide, known as lipid I. The protein is Phospho-N-acetylmuramoyl-pentapeptide-transferase of Delftia acidovorans (strain DSM 14801 / SPH-1).